Here is a 207-residue protein sequence, read N- to C-terminus: Large ribosomal subunit protein uL4 (207 aa).

The disordered stretch occupies residues 48–70 (KAQKTRSEVSGGGAKPWRQKGTG).

This sequence belongs to the universal ribosomal protein uL4 family. As to quaternary structure, part of the 50S ribosomal subunit.

One of the primary rRNA binding proteins, this protein initially binds near the 5'-end of the 23S rRNA. It is important during the early stages of 50S assembly. It makes multiple contacts with different domains of the 23S rRNA in the assembled 50S subunit and ribosome. In terms of biological role, forms part of the polypeptide exit tunnel. The sequence is that of Large ribosomal subunit protein uL4 from Francisella tularensis subsp. mediasiatica (strain FSC147).